Here is a 330-residue protein sequence, read N- to C-terminus: G-protein coupled bile acid receptor 1 (330 aa).

The Extracellular portion of the chain corresponds to 1-19 (MTPNSTGEVPSPIPKGALG). Asn-4 carries an N-linked (GlcNAc...) asparagine glycan. Residues 20–40 (LSLALASLIITANLLLALGIA) form a helical membrane-spanning segment. Residues 41 to 50 (WDRRLRSPPA) are Cytoplasmic-facing. A helical transmembrane segment spans residues 51 to 71 (GCFFLSLLLAGLLTGLALPTL). The Extracellular segment spans residues 72-85 (PGLWNQSRRGYWSC). N-linked (GlcNAc...) asparagine glycosylation is present at Asn-76. The cysteines at positions 85 and 155 are disulfide-linked. The chain crosses the membrane as a helical span at residues 86–106 (LLVYLAPNFSFLSLLANLLLV). Over 107 to 125 (HGERYMAVLRPLQPPGSIR) the chain is Cytoplasmic. Residues 126–146 (LALLLTWAGPLLFASLPALGW) form a helical membrane-spanning segment. The Extracellular segment spans residues 147-165 (NHWTPGANCSSQAIFPAPY). The helical transmembrane segment at 166 to 186 (LYLEVYGLLLPAVGAAAFLSV) threads the bilayer. Over 187–228 (RVLATAHRQLQDICRLERAVCRDEPSALARALTWRQARAQAG) the chain is Cytoplasmic. Residues 229–249 (AMLLFGLCWGPYVATLLLSVL) form a helical membrane-spanning segment. At 250 to 261 (AYEQRPPLGPGT) the chain is on the extracellular side. Residues 262-282 (LLSLLSLGSASAAAVPVAMGL) traverse the membrane as a helical segment. Over 283–330 (GDQRYTAPWRAAAQRCLQGLWGRASRDSPGPSIAYHPSSQSSVDLDLN) the chain is Cytoplasmic. The disordered stretch occupies residues 309–330 (DSPGPSIAYHPSSQSSVDLDLN). The segment covering 319–330 (PSSQSSVDLDLN) has biased composition (polar residues).

It belongs to the G-protein coupled receptor 1 family. In terms of tissue distribution, ubiquitously expressed. Expressed at higher level in spleen and placenta. Expressed at lower level in other tissues. In digestive tissues, it is expressed in stomach, duodenum, ileocecum, ileum, jejunum, ascending colon, transverse colon, descending colon, cecum and liver, but not in esophagus and rectum.

It is found in the cell membrane. In terms of biological role, receptor for bile acid. Bile acid-binding induces its internalization, activation of extracellular signal-regulated kinase and intracellular cAMP production. May be involved in the suppression of macrophage functions by bile acids. This chain is G-protein coupled bile acid receptor 1 (GPBAR1), found in Homo sapiens (Human).